Consider the following 146-residue polypeptide: MHIEYKFDTSTIQQKFKKLAQVMDGRDITRKVAGVLRQEAEKFFDLEQAPTGEKWEDLDEDYKKYRYAAGHTGKILQIRGGRGLAGSLSLDYGDNYALIGAAEEYGGFHQLGTTFMPARPFLGLGKDGVSEIKAILNRELSELTQE.

It to phage Mu protein G.

The polypeptide is Mu-like prophage FluMu G protein 1 (Haemophilus influenzae (strain ATCC 51907 / DSM 11121 / KW20 / Rd)).